The sequence spans 485 residues: Glycogen synthase (485 aa).

Residue Lys-15 participates in ADP-alpha-D-glucose binding.

The protein belongs to the glycosyltransferase 1 family. Bacterial/plant glycogen synthase subfamily.

The enzyme catalyses [(1-&gt;4)-alpha-D-glucosyl](n) + ADP-alpha-D-glucose = [(1-&gt;4)-alpha-D-glucosyl](n+1) + ADP + H(+). The protein operates within glycan biosynthesis; glycogen biosynthesis. Functionally, synthesizes alpha-1,4-glucan chains using ADP-glucose. The chain is Glycogen synthase from Thermosipho africanus (strain TCF52B).